A 303-amino-acid polypeptide reads, in one-letter code: Sulfate adenylyltransferase subunit 2 (303 aa).

The segment at 281 to 303 (RQGRVIDHDSSGSMEKKKQEGYF) is disordered.

It belongs to the PAPS reductase family. CysD subfamily. Heterodimer composed of CysD, the smaller subunit, and CysN.

The enzyme catalyses sulfate + ATP + H(+) = adenosine 5'-phosphosulfate + diphosphate. Its pathway is sulfur metabolism; hydrogen sulfide biosynthesis; sulfite from sulfate: step 1/3. With CysN forms the ATP sulfurylase (ATPS) that catalyzes the adenylation of sulfate producing adenosine 5'-phosphosulfate (APS) and diphosphate, the first enzymatic step in sulfur assimilation pathway. APS synthesis involves the formation of a high-energy phosphoric-sulfuric acid anhydride bond driven by GTP hydrolysis by CysN coupled to ATP hydrolysis by CysD. The chain is Sulfate adenylyltransferase subunit 2 from Saccharophagus degradans (strain 2-40 / ATCC 43961 / DSM 17024).